The sequence spans 403 residues: Betaine--homocysteine S-methyltransferase 1 (403 aa).

One can recognise a Hcy-binding domain in the interval 8–311 (KGLLERLDAG…YHTRAIAEEL (304 aa)). Zn(2+) is bound by residues Cys214, Cys296, and Cys297.

As to quaternary structure, homotetramer. Requires Zn(2+) as cofactor.

It is found in the cytoplasm. It catalyses the reaction L-homocysteine + glycine betaine = N,N-dimethylglycine + L-methionine. Its pathway is amine and polyamine degradation; betaine degradation; sarcosine from betaine: step 1/2. It participates in amino-acid biosynthesis; L-methionine biosynthesis via de novo pathway; L-methionine from L-homocysteine (BhmT route): step 1/1. Its function is as follows. Involved in the regulation of homocysteine metabolism. Converts betaine and homocysteine to dimethylglycine and methionine, respectively. This reaction is also required for the irreversible oxidation of choline. The protein is Betaine--homocysteine S-methyltransferase 1 (bhmt) of Xenopus tropicalis (Western clawed frog).